Consider the following 426-residue polypeptide: Anhydromevalonate phosphate decarboxylase (426 aa).

Residues Asn148 and Glu211 each coordinate Mn(2+). Asp255 (proton acceptor) is an active-site residue.

It belongs to the UbiD family. Prenylated FMN is required as a cofactor. Requires Mn(2+) as cofactor.

The enzyme catalyses (2E)-3-methyl-5-phosphooxypent-2-enoate + H(+) = isopentenyl phosphate + CO2. Its pathway is isoprenoid biosynthesis; isopentenyl diphosphate biosynthesis via mevalonate pathway. Functionally, catalyzes the conversion of trans-anhydromevalonate 5-phosphate (tAHMP) into isopentenyl phosphate. Involved in the archaeal mevalonate (MVA) pathway, which provides fundamental precursors for isoprenoid biosynthesis, such as isopentenyl diphosphate (IPP) and dimethylallyl diphosphate (DMAPP). This is Anhydromevalonate phosphate decarboxylase from Archaeoglobus fulgidus (strain ATCC 49558 / DSM 4304 / JCM 9628 / NBRC 100126 / VC-16).